Consider the following 184-residue polypeptide: ATP synthase subunit b, chloroplastic (184 aa).

A helical membrane pass occupies residues 27–49 (LATNPINLSVVLGVLIFFGKGVL).

This sequence belongs to the ATPase B chain family. F-type ATPases have 2 components, F(1) - the catalytic core - and F(0) - the membrane proton channel. F(1) has five subunits: alpha(3), beta(3), gamma(1), delta(1), epsilon(1). F(0) has four main subunits: a(1), b(1), b'(1) and c(10-14). The alpha and beta chains form an alternating ring which encloses part of the gamma chain. F(1) is attached to F(0) by a central stalk formed by the gamma and epsilon chains, while a peripheral stalk is formed by the delta, b and b' chains.

The protein resides in the plastid. It is found in the chloroplast thylakoid membrane. In terms of biological role, f(1)F(0) ATP synthase produces ATP from ADP in the presence of a proton or sodium gradient. F-type ATPases consist of two structural domains, F(1) containing the extramembraneous catalytic core and F(0) containing the membrane proton channel, linked together by a central stalk and a peripheral stalk. During catalysis, ATP synthesis in the catalytic domain of F(1) is coupled via a rotary mechanism of the central stalk subunits to proton translocation. Its function is as follows. Component of the F(0) channel, it forms part of the peripheral stalk, linking F(1) to F(0). The protein is ATP synthase subunit b, chloroplastic of Pelargonium hortorum (Common geranium).